A 788-amino-acid chain; its full sequence is Bifunctional purine biosynthetic protein ADE1 (788 aa).

Residues 1 to 429 are GARS; it reads MSLRILLVGN…NRKDIAYKAF (429 aa). Residues 114 to 323 form the ATP-grasp domain; the sequence is KDFMKKHNIP…LAEVMLACVE (210 aa). 140-201 is an ATP binding site; sequence VKKVGHRVVI…EEFLEGDELS (62 aa). Positions 291 and 293 each coordinate Mg(2+). The AIRS stretch occupies residues 439–752; it reads ITYAQAGVSI…VVKQEKVAEV (314 aa).

It in the N-terminal section; belongs to the GARS family. In the C-terminal section; belongs to the AIR synthase family. The cofactor is Mg(2+). It depends on Mn(2+) as a cofactor.

It localises to the cytoplasm. Its subcellular location is the cytosol. The enzyme catalyses 5-phospho-beta-D-ribosylamine + glycine + ATP = N(1)-(5-phospho-beta-D-ribosyl)glycinamide + ADP + phosphate + H(+). It catalyses the reaction 2-formamido-N(1)-(5-O-phospho-beta-D-ribosyl)acetamidine + ATP = 5-amino-1-(5-phospho-beta-D-ribosyl)imidazole + ADP + phosphate + H(+). It participates in purine metabolism; IMP biosynthesis via de novo pathway; 5-amino-1-(5-phospho-D-ribosyl)imidazole from N(2)-formyl-N(1)-(5-phospho-D-ribosyl)glycinamide: step 2/2. Its pathway is purine metabolism; IMP biosynthesis via de novo pathway; N(1)-(5-phospho-D-ribosyl)glycinamide from 5-phospho-alpha-D-ribose 1-diphosphate: step 2/2. In terms of biological role, catalyzes the second and fifth step in the 'de novo' purine biosynthesis pathway; contains phosphoribosylamine--glycine ligase (GARS) and phosphoribosylformylglycinamidine cyclo-ligase (AIRS) activities. This Yarrowia lipolytica (strain CLIB 122 / E 150) (Yeast) protein is Bifunctional purine biosynthetic protein ADE1.